The chain runs to 85 residues: Large ribosomal subunit protein bL31B (85 aa).

Belongs to the bacterial ribosomal protein bL31 family. Type B subfamily. Part of the 50S ribosomal subunit.

This is Large ribosomal subunit protein bL31B from Aliivibrio salmonicida (strain LFI1238) (Vibrio salmonicida (strain LFI1238)).